A 198-amino-acid chain; its full sequence is Probable GTP-binding protein EngB (198 aa).

The EngB-type G domain maps to 27–198; the sequence is DLPEVALAGR…ESWDTILSEL (172 aa). Residues 35 to 42, 62 to 66, 80 to 83, 147 to 150, and 179 to 181 contribute to the GTP site; these read GRSNVGKS, GKTQL, DVPG, TKAD, and FSS. 2 residues coordinate Mg(2+): S42 and T64.

The protein belongs to the TRAFAC class TrmE-Era-EngA-EngB-Septin-like GTPase superfamily. EngB GTPase family. It depends on Mg(2+) as a cofactor.

Its function is as follows. Necessary for normal cell division and for the maintenance of normal septation. The polypeptide is Probable GTP-binding protein EngB (Streptococcus agalactiae serotype III (strain NEM316)).